The chain runs to 1242 residues: Structural polyprotein (1242 aa).

The tract at residues 1–36 (MFPYPTLNYSPMAPVNPMAYRDPNPPRRRWRPFRPP) is necessary for nucleocapsid assembly and virus assembly. The tract at residues 1 to 104 (MFPYPTLNYS…KQKPGKRQRM (104 aa)) is disordered. A host transcription inhibition region spans residues 37–70 (LAAQIEDLRRSIANLTFKQRAPNPPAGPPAKRKK). The short motif at 44–51 (LRRSIANL) is the Supraphysiological nuclear export signal element. Positions 66-104 (AKRKKPAPKPKPAAPKKKRQPPPAKKQKRKQKPGKRQRM) are enriched in basic residues. The Nuclear localization signal motif lies at 67–70 (KRKK). Residues 83-113 (KRQPPPAKKQKRKQKPGKRQRMCMKLESDKT) form a binding to the viral RNA region. The segment at 98–112 (PGKRQRMCMKLESDK) is ribosome-binding. The residue at position 110 (S110) is a Phosphoserine. The Peptidase S3 domain maps to 112-261 (KTFPILLNGQ…KDTPEGSEPW (150 aa)). T113 is subject to Phosphothreonine. Active-site charge relay system residues include H138, D160, and S212. The tract at residues 262-273 (SLTTVMCVLANI) is functions as an uncleaved signal peptide for the precursor of protein E3/E2. An N-linked (GlcNAc...) asparagine; by host glycan is attached at N272. Residues 325-688 (DLETHFTQYK…YYYNRYPMTT (364 aa)) are Extracellular-facing. Residues 689-709 (IVGLCTCAAIIMVSCITSVWL) form a helical membrane-spanning segment. Topologically, residues 710–744 (LCRTRNLCITPYRLAPNAQVPILLAVLCCVKPTRA) are cytoplasmic. 3 S-palmitoyl cysteine; by host lipidation sites follow: C717, C737, and C738. Residues 717–737 (CITPYRLAPNAQVPILLAVLC) form a transient transmembrane before p62-6K protein processing region. Topologically, residues 745-759 (DDTLQVLNYLWNNNQ) are extracellular. Helical transmembrane passes span 760–780 (NFFW…MRML) and 781–801 (RCLL…GAAA). Residues 802–1218 (YEHTAVMPNK…WSWLKVLVGS (417 aa)) are Extracellular-facing. Intrachain disulfides connect C850/C915, C863/C895, C864/C897, C869/C879, C1061/C1073, C1103/C1178, C1108/C1182, and C1130/C1172. The E1 fusion peptide loop stretch occupies residues 885-902 (VYPFMWGGAYCFCDTENT). The helical transmembrane segment at 1219-1239 (TSAFIVLGLIATAVVALVLFT) threads the bilayer. The Cytoplasmic portion of the chain corresponds to 1240–1242 (HKH).

As to quaternary structure, part of a tetrameric complex composed of host CRM1, host importin alpha/beta dimer and the viral capsid; this complex blocks the receptor-mediated transport through the nuclear pore. Interacts with host phosphatase PPP1CA; this interaction dephosphorylates the capsid protein, which increases its ability to bind to the viral genome. Interacts with host karyopherin KPNA4; this interaction allows the nuclear import of the viral capsid protein. Interacts with spike glycoprotein E2. Interacts with host IRAK1; the interaction leads to inhibition of IRAK1-dependent signaling. The precursor of protein E3/E2 and E1 form a heterodimer shortly after synthesis. In terms of assembly, the precursor of protein E3/E2 and E1 form a heterodimer shortly after synthesis. Processing of the precursor of protein E3/E2 into E2 and E3 results in a heterodimer of the spike glycoproteins E2 and E1. Spike at virion surface are constituted of three E2-E1 heterodimers. After target cell attachment and endocytosis, E1 change conformation to form homotrimers. Interacts with 6K protein. As to quaternary structure, processing of the precursor of protein E3/E2 into E2 and E3 results in a heterodimer of the spike glycoproteins E2 and E1. Spike at virion surface are constituted of three E2-E1 heterodimers. Interacts with 6K protein. Interacts with spike glycoprotein E1. Interacts with spike glycoprotein E2. In terms of processing, structural polyprotein: Specific enzymatic cleavages in vivo yield mature proteins. Capsid protein is auto-cleaved during polyprotein translation, unmasking a signal peptide at the N-terminus of the precursor of E3/E2. The remaining polyprotein is then targeted to the host endoplasmic reticulum, where host signal peptidase cleaves it into pE2, 6K and E1 proteins. pE2 is further processed to mature E3 and E2 by host furin in trans-Golgi vesicle. Phosphorylated on serine and threonine residues. Post-translationally, palmitoylated via thioester bonds. These palmitoylations may induce disruption of the C-terminus transmembrane. This would result in the reorientation of E2 C-terminus from lumenal to cytoplasmic side. In terms of processing, N-glycosylated. Palmitoylated via thioester bonds.

It is found in the virion. It localises to the host cytoplasm. The protein resides in the host cell membrane. Its subcellular location is the host nucleus. The protein localises to the virion membrane. It carries out the reaction Autocatalytic release of the core protein from the N-terminus of the togavirus structural polyprotein by hydrolysis of a -Trp-|-Ser- bond.. In terms of biological role, forms an icosahedral capsid with a T=4 symmetry composed of 240 copies of the capsid protein surrounded by a lipid membrane through which penetrate 80 spikes composed of trimers of E1-E2 heterodimers. The capsid protein binds to the viral RNA genome at a site adjacent to a ribosome binding site for viral genome translation following genome release. Possesses a protease activity that results in its autocatalytic cleavage from the nascent structural protein. Following its self-cleavage, the capsid protein transiently associates with ribosomes, and within several minutes the protein binds to viral RNA and rapidly assembles into icosahedric core particles. The resulting nucleocapsid eventually associates with the cytoplasmic domain of the spike glycoprotein E2 at the cell membrane, leading to budding and formation of mature virions. In case of infection, new virions attach to target cells and after clathrin-mediated endocytosis their membrane fuses with the host endosomal membrane. This leads to the release of the nucleocapsid into the cytoplasm, followed by an uncoating event necessary for the genomic RNA to become accessible. The uncoating might be triggered by the interaction of capsid proteins with ribosomes. Binding of ribosomes would release the genomic RNA since the same region is genomic RNA-binding and ribosome-binding. Specifically inhibits interleukin-1 receptor-associated kinase 1/IRAK1-dependent signaling during viral entry, representing a means by which the alphaviruses may evade innate immune detection and activation prior to viral gene expression. Inhibits host transcription. Forms a tetrameric complex with XPO1/CRM1 and the nuclear import receptor importin. This complex blocks the central channel of host nuclear pores thereby inhibiting the receptor-mediated nuclear transport and thus the host mRNA and rRNA transcription. The inhibition of transcription is linked to a cytopathic effect on the host cell. Provides the signal sequence for the translocation of the precursor of protein E3/E2 to the host endoplasmic reticulum. Furin-cleaved E3 remains associated with spike glycoprotein E1 and mediates pH protection of the latter during the transport via the secretory pathway. After virion release from the host cell, the assembly protein E3 is gradually released in the extracellular space. Functionally, plays a role in viral attachment to target host cell, by binding to the cell receptor. Synthesized as a p62 precursor which is processed by furin at the cell membrane just before virion budding, giving rise to E2-E1 heterodimer. The p62-E1 heterodimer is stable, whereas E2-E1 is unstable and dissociate at low pH. p62 is processed at the last step, presumably to avoid E1 fusion activation before its final export to cell surface. E2 C-terminus contains a transitory transmembrane that would be disrupted by palmitoylation, resulting in reorientation of the C-terminal tail from lumenal to cytoplasmic side. This step is critical since E2 C-terminus is involved in budding by interacting with capsid proteins. This release of E2 C-terminus in cytoplasm occurs lately in protein export, and precludes premature assembly of particles at the endoplasmic reticulum membrane. Its function is as follows. Constitutive membrane protein involved in virus glycoprotein processing, cell permeabilization, and the budding of viral particles. Disrupts the calcium homeostasis of the cell, probably at the endoplasmic reticulum level. This leads to cytoplasmic calcium elevation. Because of its lipophilic properties, the 6K protein is postulated to influence the selection of lipids that interact with the transmembrane domains of the glycoproteins, which, in turn, affects the deformability of the bilayer required for the extreme curvature that occurs as budding proceeds. Present in low amount in virions, about 3% compared to viral glycoproteins. In terms of biological role, class II viral fusion protein. Fusion activity is inactive as long as E1 is bound to E2 in mature virion. After virus attachment to target cell and endocytosis, acidification of the endosome would induce dissociation of E1/E2 heterodimer and concomitant trimerization of the E1 subunits. This E1 trimer is fusion active, and promotes release of viral nucleocapsid in cytoplasm after endosome and viral membrane fusion. Efficient fusion requires the presence of cholesterol and sphingolipid in the target membrane. Fusion is optimal at levels of about 1 molecule of cholesterol per 2 molecules of phospholipids, and is specific for sterols containing a 3-beta-hydroxyl group. The chain is Structural polyprotein from Aedes (Human).